Reading from the N-terminus, the 480-residue chain is UDP-N-acetylmuramate--L-alanine ligase (480 aa).

ATP is bound at residue 129–135; that stretch reads GSHGKTT.

It belongs to the MurCDEF family.

The protein localises to the cytoplasm. The catalysed reaction is UDP-N-acetyl-alpha-D-muramate + L-alanine + ATP = UDP-N-acetyl-alpha-D-muramoyl-L-alanine + ADP + phosphate + H(+). It participates in cell wall biogenesis; peptidoglycan biosynthesis. In terms of biological role, cell wall formation. The sequence is that of UDP-N-acetylmuramate--L-alanine ligase from Syntrophus aciditrophicus (strain SB).